The sequence spans 364 residues: Formate dehydrogenase (364 aa).

2 residues coordinate substrate: valine 93 and asparagine 119. NAD(+)-binding positions include 174–175, aspartate 195, 230–234, threonine 256, aspartate 282, and 311–314; these read RI, PLHAG, and HYSG.

The protein belongs to the D-isomer specific 2-hydroxyacid dehydrogenase family. FDH subfamily. Homodimer.

The protein localises to the cytoplasm. The catalysed reaction is formate + NAD(+) = CO2 + NADH. Its activity is regulated as follows. Cu(2+), Hg and p-chloromercuribenzoate are strong inhibitors of enzyme activity and Ca(2+), Mg(2+), Zn(2+), Mn(2+), Cd(2+) and Sn(2+) have no effect on activity indicating a cysteine residue in the protein is essential for enzyme activity or to maintain the proper structure of the enzyme. Nitrite and nitrate inhibit some enzyme activity, however cyanide, azide, thiocyanate and cyanate are strong inhibitors of the enzymatic reaction. The inhibition of cyanide is competitive with formate and reversible. Its function is as follows. Catalyzes the NAD(+)-dependent oxidation of formate to carbon dioxide. Formate oxidation is the final step in the methanol oxidation pathway in methylotrophic microorganisms. Has a role in the detoxification of exogenous formate in non-methylotrophic organisms. This chain is Formate dehydrogenase, found in Candida boidinii (Yeast).